The sequence spans 36 residues: Kappa-isophellitoxin-Tst1a (36 aa).

The region spanning 2–36 (CENNFSDRECERRKKDCDSSMKFRELSCPKTCGTC) is the ShKT domain. Intrachain disulfides connect C2/C36, C11/C29, and C18/C33.

This sequence belongs to the sea anemone type 1 potassium channel toxin family. Type 1a subfamily. Predominantly expressed in mesenterial filaments (at protein level), a morphological structure that has a functional role in prey killing and digestion. Also expressed in club-tips, tentacles, actinopharynx, body column, mesenterial filaments and pedal disk.

It localises to the secreted. The protein localises to the nematocyst. Probable toxin with unknown function. Does not inhibit all channels tested. Is not cytotoxic on macrophage. The sequence is that of Kappa-isophellitoxin-Tst1a from Telmatactis stephensoni (Sea anemone).